Reading from the N-terminus, the 77-residue chain is MESIFNNSFATLIAYIGIISTYLLVIPLLLFYWMNNRWNIMGKFERLGIYGLVFLFFPGLILFSPFLNLRLKGTGKG.

2 consecutive transmembrane segments (helical) span residues 12–32 (LIAY…LLFY) and 47–67 (LGIY…SPFL).

The protein belongs to the complex I NdhL subunit family. As to quaternary structure, NDH-1 can be composed of about 15 different subunits; different subcomplexes with different compositions have been identified which probably have different functions.

It is found in the cellular thylakoid membrane. The enzyme catalyses a plastoquinone + NADH + (n+1) H(+)(in) = a plastoquinol + NAD(+) + n H(+)(out). The catalysed reaction is a plastoquinone + NADPH + (n+1) H(+)(in) = a plastoquinol + NADP(+) + n H(+)(out). NDH-1 shuttles electrons from an unknown electron donor, via FMN and iron-sulfur (Fe-S) centers, to quinones in the respiratory and/or the photosynthetic chain. The immediate electron acceptor for the enzyme in this species is believed to be plastoquinone. Couples the redox reaction to proton translocation, and thus conserves the redox energy in a proton gradient. Cyanobacterial NDH-1 also plays a role in inorganic carbon-concentration. The protein is NAD(P)H-quinone oxidoreductase subunit L of Prochlorococcus marinus (strain MIT 9301).